Here is a 615-residue protein sequence, read N- to C-terminus: Nuclear receptor subfamily 1 group D member 1 (615 aa).

Positions 1–12 (MTTLDSNNNTGG) are enriched in polar residues. The interval 1–70 (MTTLDSNNNT…TQDPARSFGS (70 aa)) is required for phosphorylation by CSNK1E and cytoplasmic localization. The tract at residues 1-120 (MTTLDSNNNT…SSRVSPSKGT (120 aa)) is disordered. Residues 1 to 129 (MTTLDSNNNT…TSNITKLNGM (129 aa)) form a modulating region. The span at 14 to 34 (ITYIGSSGSSPSRTSPESLYS) shows a compositional bias: low complexity. The segment covering 35–48 (DSSNGSFQSLTQGC) has biased composition (polar residues). The interval 49-285 (PTYFPPSPTG…PPRSPSPEPT (237 aa)) is crucial for activation of GJA1. Phosphoserine; by GSK3-beta occurs at positions 55 and 59. Low complexity predominate over residues 70 to 94 (SAPPSLSDDSSPSSASSSSSSSSSS). The nuclear receptor DNA-binding region spans 130-206 (VLLCKVCGDV…VGMSRDAVRF (77 aa)). NR C4-type zinc fingers lie at residues 133-153 (CKVC…CEGC) and 170-194 (CLKN…FKKC). 2 positions are modified to N6-acetyllysine; by KAT5: lysine 192 and lysine 193. Disordered stretches follow at residues 235–286 (LCPL…EPTM) and 312–337 (PGNF…SQGC). Low complexity predominate over residues 240-252 (TSPTPHPTSGSMG). The span at 253–262 (PSPPPAPAPT) shows a compositional bias: pro residues. The residue at position 275 (threonine 275) is a Phosphothreonine; by CDK1. The region spanning 285–615 (TMEDVISQVA…KLLSFRVDAQ (331 aa)) is the NR LBD domain. The segment covering 312-328 (PGNFNANHASGSPSATT) has biased composition (polar residues). Heme is bound at residue cysteine 419. The residue at position 592 (lysine 592) is an N6-acetyllysine. A heme-binding site is contributed by histidine 603.

The protein belongs to the nuclear hormone receptor family. NR1 subfamily. As to quaternary structure, binds DNA as a monomer or a homodimer. Interacts with NR2E3 and ZNHIT1. Interacts with C1D. Interacts with SP1. Interacts with OPHN1 (via C-terminus). Interacts with PER2; the interaction associates PER2 to BMAL1 promoter region. Interacts with CRY1. Interacts with CCAR2. Interacts with SIAH2. Interacts with FBXW7 and CDK1. Interacts with HUWE1. Interacts with NR0B2. Interacts with NFIL3. Interacts (via domain NR LBD) with HSP90AA1 and HSP90AB1. In terms of processing, ubiquitinated, leading to its proteasomal degradation. Ubiquitinated by the SCF(FBXW7) complex when phosphorylated by CDK1 leading to its proteasomal degradation. Ubiquitinated by SIAH2; leading to its proteasomal degradation. Rapidly ubiquitinated in response to inflammatory triggers and sumoylation is a prerequisite to its ubiquitination. Post-translationally, sumoylated by UBE2I, desumoylated by SENP1, and sumoylation is a prerequisite to its ubiquitination. Phosphorylated by CSNK1E; phosphorylation enhances its cytoplasmic localization. In terms of processing, undergoes lysosome-mediated degradation in a time-dependent manner in the liver. As to expression, expressed during adipocyte differentiation (at protein level). Expressed in skeletal muscle, bladder, lumbar spinal cord, pancreatic islets and hypothalamus. Expressed in developing and adult retina. In the adult retina, predominantly expressed in the outer nuclear layer, where rod and cone cells reside, and also localized to the ganglion cell layer. Expressed in a circadian manner in the liver. Expressed in a circadian manner in the lung with a peak between ZT8 and ZT12.

The protein localises to the nucleus. The protein resides in the cytoplasm. Its subcellular location is the cell projection. It is found in the dendrite. It localises to the dendritic spine. Transcriptional repressor which coordinates circadian rhythm and metabolic pathways in a heme-dependent manner. Integral component of the complex transcription machinery that governs circadian rhythmicity and forms a critical negative limb of the circadian clock by directly repressing the expression of core clock components BMAL1, CLOCK and CRY1. Also regulates genes involved in metabolic functions, including lipid and bile acid metabolism, adipogenesis, gluconeogenesis and the macrophage inflammatory response. Acts as a receptor for heme which stimulates its interaction with the NCOR1/HDAC3 corepressor complex, enhancing transcriptional repression. Recognizes two classes of DNA response elements within the promoter of its target genes and can bind to DNA as either monomers or homodimers, depending on the nature of the response element. Binds as a monomer to a response element composed of the consensus half-site motif 5'-[A/G]GGTCA-3' preceded by an A/T-rich 5' sequence (RevRE), or as a homodimer to a direct repeat of the core motif spaced by two nucleotides (RevDR-2). Acts as a potent competitive repressor of ROR alpha (RORA) function and regulates the levels of its ligand heme by repressing the expression of PPARGC1A, a potent inducer of heme synthesis. Regulates lipid metabolism by repressing the expression of APOC3 and by influencing the activity of sterol response element binding proteins (SREBPs); represses INSIG2 which interferes with the proteolytic activation of SREBPs which in turn govern the rhythmic expression of enzymes with key functions in sterol and fatty acid synthesis. Regulates gluconeogenesis via repression of G6PC1 and PEPCK and adipocyte differentiation via repression of PPARG. Regulates glucagon release in pancreatic alpha-cells via the AMPK-NAMPT-SIRT1 pathway and the proliferation, glucose-induced insulin secretion and expression of key lipogenic genes in pancreatic-beta cells. Positively regulates bile acid synthesis by increasing hepatic expression of CYP7A1 via repression of NR0B2 and NFIL3 which are negative regulators of CYP7A1. Modulates skeletal muscle oxidative capacity by regulating mitochondrial biogenesis and autophagy; controls mitochondrial biogenesis and respiration by interfering with the STK11-PRKAA1/2-SIRT1-PPARGC1A signaling pathway. Represses the expression of SERPINE1/PAI1, an important modulator of cardiovascular disease and the expression of inflammatory cytokines and chemokines in macrophages. Represses gene expression at a distance in macrophages by inhibiting the transcription of enhancer-derived RNAs (eRNAs). Plays a role in the circadian regulation of body temperature and negatively regulates thermogenic transcriptional programs in brown adipose tissue (BAT); imposes a circadian oscillation in BAT activity, increasing body temperature when awake and depressing thermogenesis during sleep. In concert with NR2E3, regulates transcriptional networks critical for photoreceptor development and function. In addition to its activity as a repressor, can also act as a transcriptional activator. In the ovarian granulosa cells acts as a transcriptional activator of STAR which plays a role in steroid biosynthesis. In collaboration with SP1, activates GJA1 transcription in a heme-independent manner. Represses the transcription of CYP2B10, CYP4A10 and CYP4A14. Represses the transcription of CES2. Represses and regulates the circadian expression of TSHB in a NCOR1-dependent manner. Negatively regulates the protein stability of NR3C1 and influences the time-dependent subcellular distribution of NR3C1, thereby affecting its transcriptional regulatory activity. Plays a critical role in the circadian control of neutrophilic inflammation in the lung; under resting, non-stress conditions, acts as a rhythmic repressor to limit inflammatory activity whereas in the presence of inflammatory triggers undergoes ubiquitin-mediated degradation thereby relieving inhibition of the inflammatory response. Plays a key role in the circadian regulation of microglial activation and neuroinflammation; suppresses microglial activation through the NF-kappaB pathway in the central nervous system. Plays a role in the regulation of the diurnal rhythms of lipid and protein metabolism in the skeletal muscle via transcriptional repression of genes controlling lipid and amino acid metabolism in the muscle. The polypeptide is Nuclear receptor subfamily 1 group D member 1 (Nr1d1) (Mus musculus (Mouse)).